The sequence spans 40 residues: Allophycocyanin alpha-B chain (40 aa).

This sequence belongs to the phycobiliprotein family. As to quaternary structure, heterodimer of an alpha and a beta chain. Contains one covalently linked bilin chromophore.

The protein resides in the cellular thylakoid membrane. In terms of biological role, light-harvesting photosynthetic bile pigment-protein from the phycobiliprotein complex. Allophycocyanin has a maximum absorption at approximately 650 nanometers. This chain is Allophycocyanin alpha-B chain, found in Mastigocladus laminosus (Fischerella sp.).